A 259-amino-acid chain; its full sequence is Thiazole synthase (259 aa).

The Schiff-base intermediate with DXP role is filled by Lys-95. 1-deoxy-D-xylulose 5-phosphate contacts are provided by residues Gly-156, 182-183 (AG), and 204-205 (AS).

Belongs to the ThiG family. In terms of assembly, homotetramer. Forms heterodimers with either ThiH or ThiS.

It localises to the cytoplasm. It catalyses the reaction [ThiS sulfur-carrier protein]-C-terminal-Gly-aminoethanethioate + 2-iminoacetate + 1-deoxy-D-xylulose 5-phosphate = [ThiS sulfur-carrier protein]-C-terminal Gly-Gly + 2-[(2R,5Z)-2-carboxy-4-methylthiazol-5(2H)-ylidene]ethyl phosphate + 2 H2O + H(+). Its pathway is cofactor biosynthesis; thiamine diphosphate biosynthesis. Functionally, catalyzes the rearrangement of 1-deoxy-D-xylulose 5-phosphate (DXP) to produce the thiazole phosphate moiety of thiamine. Sulfur is provided by the thiocarboxylate moiety of the carrier protein ThiS. In vitro, sulfur can be provided by H(2)S. This is Thiazole synthase from Corynebacterium efficiens (strain DSM 44549 / YS-314 / AJ 12310 / JCM 11189 / NBRC 100395).